Reading from the N-terminus, the 1068-residue chain is WD repeat-containing protein on Y chromosome (1068 aa).

WD repeat units lie at residues 155 to 199 (DEVT…IRTA), 201 to 242 (SESI…RGPF), 322 to 361 (RIPL…EPSA), 365 to 404 (GHNG…LLQT), 455 to 494 (THAA…RKII), 507 to 546 (IIDI…VVRN), and 594 to 634 (FHTD…RRYS). Positions 657–687 (SKRLASRPTPGNHGLQMGRAGRSTVLNRPED) are disordered. WD repeat units follow at residues 746–785 (KTGD…VPET) and 829–868 (GHLK…LGTL). Residues 1026 to 1068 (SAINIKQPSRRRSDKTNDTRNVRTPRARDLIALEMSSSHASQS) form a disordered region. The segment covering 1039–1056 (DKTNDTRNVRTPRARDLI) has biased composition (basic and acidic residues).

The sequence is that of WD repeat-containing protein on Y chromosome from Drosophila yakuba (Fruit fly).